The sequence spans 160 residues: Interleukin-36 alpha (160 aa).

Positions 1–7 (MNKEKEL) are excised as a propeptide. Y98 carries the post-translational modification 3'-nitrotyrosine.

It belongs to the IL-1 family. Interacts with TMED10; the interaction mediates the translocation from the cytoplasm into the ERGIC (endoplasmic reticulum-Golgi intermediate compartment) and thereby secretion. N-terminal truncation leads to a dramatic enhancement of its activity (&gt;1000-fold). In terms of tissue distribution, highly expressed in embryonic tissue and in tissues containing epithelial cells. Elevated expression levels are detected in chronic kidney disease; expressed inepithelia from the distal convoluted tubules (DCTs) to the cortical collecting ducts (CCDs) in single nephrons (at protein level).

Its subcellular location is the cytoplasm. It localises to the secreted. Its function is as follows. Cytokine that binds to and signals through the IL1RL2/IL-36R receptor which in turn activates NF-kappa-B and MAPK signaling pathways in target cells linked to a pro-inflammatory response. Part of the IL-36 signaling system that is thought to be present in epithelial barriers and to take part in local inflammatory response; similar to the IL-1 system with which it shares the coreceptor IL1RAP. Seems to be involved in skin inflammatory response by acting on keratinocytes, dendritic cells and indirectly on T-cells to drive tissue infiltration, cell maturation and cell proliferation. Induces the production of pro-inflammatory cytokines, including IL-12, Il-1 beta, IL-6, TNF-alpha and IL-23 in bone marrow-derived dendritic cells (BMDCs). Involved in dendritic cell maturation by stimulating the surface expression of CD80, CD86 and MHC class II. Induces the production of IFN-gamma, IL-4 and IL-17 by cultured CD4(+) T-cells and splenocytes. May play a role in pro-inflammatory effects in the lung: induces the expression of CXCL1 and CXCL2 in the lung, and the expression of TNF-alpha, IL-36c, IL-1A, IL-1B, CXCL1 and CXCL2 in isolated splenic CD11c(+) alveolar macrophages. May be involved in T-cell maturation by stimulating the surface expression of CD40 and modestly CD80 and CD86 in splenic CD11c(+) cells. May be involved in CD4(+) T-cell proliferation. Induces NF-kappa B activation in macrophages. The sequence is that of Interleukin-36 alpha from Mus musculus (Mouse).